Consider the following 617-residue polypeptide: Membrane protein insertase YidC (617 aa).

Residues Met8–Gly28 form a helical membrane-spanning segment. Residues Gln36–Pro49 are compositionally biased toward polar residues. Positions Gln36–Ser91 are disordered. Low complexity predominate over residues Pro61–Pro81. Transmembrane regions (helical) follow at residues Leu387–Leu407, Trp461–Ile481, Phe517–Val533, and Ile549–Val569.

This sequence belongs to the OXA1/ALB3/YidC family. Type 1 subfamily. As to quaternary structure, interacts with the Sec translocase complex via SecD. Specifically interacts with transmembrane segments of nascent integral membrane proteins during membrane integration.

It localises to the cell inner membrane. Required for the insertion and/or proper folding and/or complex formation of integral membrane proteins into the membrane. Involved in integration of membrane proteins that insert both dependently and independently of the Sec translocase complex, as well as at least some lipoproteins. Aids folding of multispanning membrane proteins. In Methylobacterium radiotolerans (strain ATCC 27329 / DSM 1819 / JCM 2831 / NBRC 15690 / NCIMB 10815 / 0-1), this protein is Membrane protein insertase YidC.